Consider the following 381-residue polypeptide: Pectin lyase 1 (381 aa).

A signal peptide spans 1–20 (MKYASFIAAAAAALASAVSA). 2 disulfides stabilise this stretch: C83–C102 and C92–C227. The N-linked (GlcNAc...) asparagine glycan is linked to N130. R257 is a catalytic residue. C324 and C332 are joined by a disulfide.

This sequence belongs to the polysaccharide lyase 1 family.

The protein localises to the secreted. The enzyme catalyses Eliminative cleavage of (1-&gt;4)-alpha-D-galacturonan methyl ester to give oligosaccharides with 4-deoxy-6-O-methyl-alpha-D-galact-4-enuronosyl groups at their non-reducing ends.. Pectinolytic enzymes consist of four classes of enzymes: pectin lyase, polygalacturonase, pectin methylesterase and rhamnogalacturonase. Among pectinolytic enzymes, pectin lyase is the most important in depolymerization of pectin, since it cleaves internal glycosidic bonds of highly methylated pectins. This Aspergillus oryzae (strain ATCC 42149 / RIB 40) (Yellow koji mold) protein is Pectin lyase 1 (pel1).